The primary structure comprises 391 residues: Sister chromatid cohesion protein DCC1 (391 aa).

It belongs to the DCC1 family. As to quaternary structure, component of the ctf18-RFC complex which consists of ctf18, ctf8, dscc1 and the RFC complex.

Its subcellular location is the nucleus. Its function is as follows. Loads pcna onto primed templates regulating velocity, spacing and restart activity of replication forks. May couple DNA replication to sister chromatid cohesion. The polypeptide is Sister chromatid cohesion protein DCC1 (dscc1) (Xenopus tropicalis (Western clawed frog)).